A 484-amino-acid polypeptide reads, in one-letter code: Fumigaclavine B O-acetyltransferase ifgI (484 aa).

This sequence belongs to the fumigaclavine B O-acetyltransferase family. Monomer.

It catalyses the reaction fumigaclavine B + acetyl-CoA = fumigaclavine A + CoA. The protein operates within alkaloid biosynthesis; ergot alkaloid biosynthesis. Its function is as follows. Fumigaclavine B O-acetyltransferase; part of the gene cluster that mediates the biosynthesis of isofumigaclavines, fungal ergot alkaloids. The tryptophan dimethylallyltransferase ifgA catalyzes the first step of ergot alkaloid biosynthesis by condensing dimethylallyl diphosphate (DMAP) and tryptophan to form 4-dimethylallyl-L-tryptophan. The second step is catalyzed by the methyltransferase ifgB that methylates 4-dimethylallyl-L-tryptophan in the presence of S-adenosyl-L-methionine, resulting in the formation of N-methyl-dimethylallyl-L-tryptophan. The catalase ifgD and the FAD-dependent oxidoreductase ifgC then transform N-methyl-dimethylallyl-L-tryptophan to chanoclavine-I which is further oxidized by ifgE in the presence of NAD(+), resulting in the formation of chanoclavine-I aldehyde. The chanoclavine-I aldehyde reductases ifgG and/or fgaOx3 reduce chanoclavine-I aldehyde to dihydrochanoclavine-I aldehyde that spontaneously dehydrates to form 6,8-dimethyl-6,7-didehydroergoline. The festuclavine dehydrogenases ifgF1 and/or ifgF2 then catalyze the reduction of 6,8-dimethyl-6,7-didehydroergoline to form festuclavine. Hydrolysis of festuclavine by a yet undetermined cytochrome P450 monooxygenase (called ifgH) then leads to the formation of isofumigaclavine B which is in turn acetylated by ifgI to isofumigaclavine A. Penicillium roqueforti has interestingly at least two sets of genes for the consumption of chanoclavine-I aldehyde on three different loci, the OYEs ifgG/fgaOx3 and the festuclavine synthase homologs ifgF1/ifgF2. The reason for the duplication of these genes is unclear, probably to ensure the conversion of chanoclavine-I aldehyde by differential gene expression under various environmental conditions. The protein is Fumigaclavine B O-acetyltransferase ifgI of Penicillium roqueforti (strain FM164).